A 248-amino-acid polypeptide reads, in one-letter code: MLKNIYVTPLNLLKSATSLQQQVRTTFVLKRKYDPPLHKTNEKPRRMRAKNFIYELVDDTLVKKRPNIEVVLKTFVEGVGDKGDVVSMKPHFVYNKLLLPGLAAYNTPENVAKYAKTEAEKSTVKHSSPYAQRTVNMLETIVLAVVMNKDEPWVLEPWHIKASLRKTGFYCREECITLPKERIEGPDLKKENKDFYCTVTINKLEQARLKCRLHHWSTDPSERLPYVLEHWKLQSEPLLDVCSPEKTP.

The transit peptide at Met1–Thr25 directs the protein to the mitochondrion.

It belongs to the bacterial ribosomal protein bL9 family. As to quaternary structure, component of the mitochondrial ribosome large subunit (39S) which comprises a 16S rRNA and about 50 distinct proteins.

The protein resides in the mitochondrion. The polypeptide is Large ribosomal subunit protein bL9m (mRpL9) (Drosophila melanogaster (Fruit fly)).